Consider the following 787-residue polypeptide: Lon protease (787 aa).

One can recognise a Lon N-terminal domain in the interval 12–210; that stretch reads LPLIPLRGLA…LIYSILLEEI (199 aa). Residue 362-369 coordinates ATP; it reads GPPGTGKT. One can recognise a Lon proteolytic domain in the interval 599–780; that stretch reads NPQIGLVNGL…DEVLEQALLK (182 aa). Catalysis depends on residues serine 686 and lysine 729.

Belongs to the peptidase S16 family. As to quaternary structure, homohexamer. Organized in a ring with a central cavity.

It is found in the cytoplasm. It catalyses the reaction Hydrolysis of proteins in presence of ATP.. In terms of biological role, ATP-dependent serine protease that mediates the selective degradation of mutant and abnormal proteins as well as certain short-lived regulatory proteins. Required for cellular homeostasis and for survival from DNA damage and developmental changes induced by stress. Degrades polypeptides processively to yield small peptide fragments that are 5 to 10 amino acids long. Binds to DNA in a double-stranded, site-specific manner. In Clostridioides difficile (strain 630) (Peptoclostridium difficile), this protein is Lon protease.